An 82-amino-acid polypeptide reads, in one-letter code: MDCRLGCGACCIAPSISSPIPGMPNGKPAGVRCVQLNEDNLCQLFGRPERPKVCHDFKACPVVCGKTNQQALANLTELERLT.

The protein belongs to the UPF0153 family.

In Vibrio cholerae serotype O1 (strain ATCC 39315 / El Tor Inaba N16961), this protein is UPF0153 protein VC_1057.